A 385-amino-acid polypeptide reads, in one-letter code: 3-hydroxyisobutyryl-CoA hydrolase, mitochondrial (385 aa).

Substrate-binding residues include E120, G145, E168, and D176.

It belongs to the enoyl-CoA hydratase/isomerase family.

The protein localises to the mitochondrion. It carries out the reaction 3-hydroxy-2-methylpropanoyl-CoA + H2O = 3-hydroxy-2-methylpropanoate + CoA + H(+). It functions in the pathway amino-acid degradation; L-valine degradation. In terms of biological role, hydrolyzes 3-hydroxyisobutyryl-CoA (HIBYL-CoA), a saline catabolite. Has high activity toward isobutyryl-CoA. Could be an isobutyryl-CoA dehydrogenase that functions in valine catabolism. Also hydrolyzes 3-hydroxypropanoyl-CoA. This Xenopus laevis (African clawed frog) protein is 3-hydroxyisobutyryl-CoA hydrolase, mitochondrial (hibch).